Here is a 476-residue protein sequence, read N- to C-terminus: Aspartyl/glutamyl-tRNA(Asn/Gln) amidotransferase subunit B (476 aa).

It belongs to the GatB/GatE family. GatB subfamily. As to quaternary structure, heterotrimer of A, B and C subunits.

It carries out the reaction L-glutamyl-tRNA(Gln) + L-glutamine + ATP + H2O = L-glutaminyl-tRNA(Gln) + L-glutamate + ADP + phosphate + H(+). It catalyses the reaction L-aspartyl-tRNA(Asn) + L-glutamine + ATP + H2O = L-asparaginyl-tRNA(Asn) + L-glutamate + ADP + phosphate + 2 H(+). Its function is as follows. Allows the formation of correctly charged Asn-tRNA(Asn) or Gln-tRNA(Gln) through the transamidation of misacylated Asp-tRNA(Asn) or Glu-tRNA(Gln) in organisms which lack either or both of asparaginyl-tRNA or glutaminyl-tRNA synthetases. The reaction takes place in the presence of glutamine and ATP through an activated phospho-Asp-tRNA(Asn) or phospho-Glu-tRNA(Gln). The chain is Aspartyl/glutamyl-tRNA(Asn/Gln) amidotransferase subunit B from Listeria monocytogenes serotype 4b (strain CLIP80459).